Here is a 94-residue protein sequence, read N- to C-terminus: Large ribosomal subunit protein eL42 (94 aa).

Zn(2+) is bound by residues cysteine 11, cysteine 14, cysteine 71, and cysteine 74. Residues 11-74 (CPFCKKHTIH…LDLRFRCTEC (64 aa)) form a C4-type zinc finger.

The protein belongs to the eukaryotic ribosomal protein eL42 family. Part of the 50S ribosomal subunit. Requires Zn(2+) as cofactor.

In terms of biological role, binds to the 23S rRNA. The protein is Large ribosomal subunit protein eL42 of Pyrococcus furiosus (strain ATCC 43587 / DSM 3638 / JCM 8422 / Vc1).